Consider the following 210-residue polypeptide: Holliday junction resolvase RecU (210 aa).

The tract at residues 1-34 (MAFHYPNGQPYSNHETKQPKKQGRHTSPTTLYGK) is disordered. Mg(2+) is bound by residues Thr90, Asp92, Glu105, and Gln124.

It belongs to the RecU family. Mg(2+) is required as a cofactor.

Its subcellular location is the cytoplasm. The enzyme catalyses Endonucleolytic cleavage at a junction such as a reciprocal single-stranded crossover between two homologous DNA duplexes (Holliday junction).. Its function is as follows. Endonuclease that resolves Holliday junction intermediates in genetic recombination. Cleaves mobile four-strand junctions by introducing symmetrical nicks in paired strands. Promotes annealing of linear ssDNA with homologous dsDNA. Required for DNA repair, homologous recombination and chromosome segregation. The polypeptide is Holliday junction resolvase RecU (Latilactobacillus sakei subsp. sakei (strain 23K) (Lactobacillus sakei subsp. sakei)).